Reading from the N-terminus, the 276-residue chain is Outer membrane lipoprotein 2 (276 aa).

The signal sequence occupies residues 1-19 (MNFKKLLGVALVSALALTA). The N-palmitoyl cysteine moiety is linked to residue Cys-20. Cys-20 carries the S-diacylglycerol cysteine lipid modification.

This sequence belongs to the NlpA lipoprotein family.

The protein localises to the cell outer membrane. The chain is Outer membrane lipoprotein 2 (plpB) from Mannheimia haemolytica (Pasteurella haemolytica).